Consider the following 333-residue polypeptide: B3 domain-containing transcription factor NGA4 (333 aa).

The segment at residues 36 to 145 is a DNA-binding region (TF-B3); it reads FDKVLTPSDV…KIMFIDWRPR (110 aa). The tract at residues 268 to 333 is disordered; it reads VEESSSSGDT…YKRKGKSLEL (66 aa). Residues 323-333 show a composition bias toward basic and acidic residues; the sequence is EYKRKGKSLEL.

Its subcellular location is the nucleus. Functionally, regulates lateral organ growth. Functionally redundant with NGA1, NGA2 and NGA3. The polypeptide is B3 domain-containing transcription factor NGA4 (NGA4) (Arabidopsis thaliana (Mouse-ear cress)).